The following is a 137-amino-acid chain: Methylglyoxal synthase (137 aa).

Residues M1–V137 enclose the MGS-like domain. Substrate is bound by residues H8, K12, T34–T37, and S54–G55. Catalysis depends on D60, which acts as the Proton donor/acceptor. H87 is a binding site for substrate.

It belongs to the methylglyoxal synthase family.

It catalyses the reaction dihydroxyacetone phosphate = methylglyoxal + phosphate. Its function is as follows. Catalyzes the formation of methylglyoxal from dihydroxyacetone phosphate. In Bacillus subtilis (strain 168), this protein is Methylglyoxal synthase.